The following is a 327-amino-acid chain: MLIAHRPTLIEKKVSDIRSRFIIEPLEPGFGYTLGNSLRRTLLSSIPGAAVTSINIQGVMHEFSTIPGVKEDVTEIVLNVKRLVISSEIDEPFTVRLYKTGEGEVLAKDIEVPTGIEIGNGDLVIATLAKDAVFDMQLTIERGRGYVSAEQNRNDGMSLAGHIPVDSIYSPVHKVTYRVEATRAGERTDFDRLIIDVETKPSILPRDAVASAGKTLCELFGLARELNSQAEGVEFGVDSMIPESDEDLRIPIEDLGLSVRSYNCLKREGVNYVSELLGFSEQELLDIRNFGQKSADEVQEKLAELGHSLKGSVPGFDGSYFDPNYGS.

Residues methionine 1–asparagine 227 form an alpha N-terminal domain (alpha-NTD) region. The interval serine 244–serine 327 is alpha C-terminal domain (alpha-CTD).

The protein belongs to the RNA polymerase alpha chain family. Homodimer. The RNAP catalytic core consists of 2 alpha, 1 beta, 1 beta' and 1 omega subunit. When a sigma factor is associated with the core the holoenzyme is formed, which can initiate transcription.

It carries out the reaction RNA(n) + a ribonucleoside 5'-triphosphate = RNA(n+1) + diphosphate. Functionally, DNA-dependent RNA polymerase catalyzes the transcription of DNA into RNA using the four ribonucleoside triphosphates as substrates. The polypeptide is DNA-directed RNA polymerase subunit alpha (Tropheryma whipplei (strain TW08/27) (Whipple's bacillus)).